A 299-amino-acid chain; its full sequence is Plasmodesmata-located protein 5 (299 aa).

Positions 1–25 (MIKTKTTSLLCFLLTAVILMNPSSS) are cleaved as a signal peptide. The Extracellular portion of the chain corresponds to 26 to 264 (SPTDNYIYAV…NKDDNGVGKT (239 aa)). 2 Gnk2-homologous domains span residues 29–135 (DNYI…NKSF) and 137–237 (GVQD…VGGS). 6 disulfides stabilise this stretch: cysteine 36–cysteine 113, cysteine 89–cysteine 98, cysteine 101–cysteine 126, cysteine 148–cysteine 215, cysteine 191–cysteine 200, and cysteine 203–cysteine 228. The helical transmembrane segment at 265-285 (LAIIIGIVTLIILLVVFLAFV) threads the bilayer. Residues 265–285 (LAIIIGIVTLIILLVVFLAFV) are necessary and sufficient for plasmodesmal targeting. Topologically, residues 286–299 (GKCCRKLQDEKWCK) are cytoplasmic.

It belongs to the cysteine-rich repeat secretory protein family. Plasmodesmata-located proteins (PDLD) subfamily. In terms of assembly, monomer. Interacts with PDLP1. As to quaternary structure, (Microbial infection) Interacts with Grapevine fanleaf virus (GFLV) 2B-MP. In terms of tissue distribution, highly expressed in inflorescence nodes and rosette senescent leaves. Mostly expressed in cell wall junctions between leaf epidermal and mesophyl cells, and to a lesser extent at the cross walls between epidermal or cortex cells within the hypocotyl (at protein level). Low vascular expression in seedling and mature leaf, but high expression in senescing leaves (at protein level).

Its subcellular location is the cell membrane. The protein localises to the cell junction. The protein resides in the plasmodesma. Its function is as follows. Modulates cell-to-cell trafficking. Has a positive role in innate immunity. Required for systemic acquired resistance (SAR) which is mediated by the signaling molecules azelaic acid (AzA), glycerol-3-phosphate (G3P), and salicylic acid (SA). Negative regulator of plasmodesmata permeability triggered by SA during immune responses, through regulation of callose deposition. Delays the trafficking of Tobacco Mosaic Virus (TMV) movement protein (MP). Required for symplastic signal transport. This is Plasmodesmata-located protein 5 from Arabidopsis thaliana (Mouse-ear cress).